The chain runs to 143 residues: uncharacterized protein (143 aa).

Transmembrane regions (helical) follow at residues 20–39 (FKYC…WITV) and 113–135 (YFSL…ITGL).

It is found in the membrane. This is an uncharacterized protein from Saccharomyces cerevisiae (strain ATCC 204508 / S288c) (Baker's yeast).